A 470-amino-acid polypeptide reads, in one-letter code: Protein C-ets-2 (470 aa).

Residues 85-170 (ATFSGFKKEQ…EHLEQMIKEN (86 aa)) form the PNT domain. Position 225 is a phosphoserine (Ser-225). Residues 270 to 291 (ASGKPRDHDSAETGGDSFESSE) are disordered. Residues Ser-296, Ser-299, and Ser-302 each carry the phosphoserine modification. Positions 364–444 (IQLWQFLLEL…SGKRYVYRFV (81 aa)) form a DNA-binding region, ETS.

It belongs to the ETS family. Post-translationally, phosphorylation by CDK10 at Ser-225 may create a phosphodegron that targets ETS2 for proteasomal degradation.

It localises to the nucleus. Its function is as follows. Transcription factor activating transcription. Binds specifically the GGA DNA motif in gene promoters and stimulates transcription of those genes. The sequence is that of Protein C-ets-2 (ETS2) from Bos taurus (Bovine).